Reading from the N-terminus, the 628-residue chain is Alpha pinene synthase, chloroplastic (628 aa).

The transit peptide at 1-46 (MSLGCITPLASAMVGPKLVRPLIHHNPLFHHKPLNRPYLQTKIPLR) directs the protein to the chloroplast. 3 residues coordinate Mg(2+): Asp-381, Asp-385, and Glu-532. The DDXXD motif motif lies at 381–385 (DDMYD).

Belongs to the terpene synthase family. Tpsa subfamily. Mg(2+) is required as a cofactor. The cofactor is Mn(2+).

The protein localises to the plastid. The protein resides in the chloroplast. It carries out the reaction (2E)-geranyl diphosphate = alpha-pinene + diphosphate. It functions in the pathway secondary metabolite biosynthesis; terpenoid biosynthesis. Functionally, monoterpene synthase involved in the biosynthesis of volatile compounds. Mediates the conversion of (2E)-geranyl diphosphate (GPP) into alpha-pinene. The sequence is that of Alpha pinene synthase, chloroplastic from Chamaecyparis formosensis (Formosan cypress).